The sequence spans 380 residues: 1-deoxy-D-xylulose 5-phosphate reductoisomerase (380 aa).

NADPH contacts are provided by Thr-10, Gly-11, Ser-12, Ile-13, Gly-36, Arg-37, Asn-38, and Asn-120. A 1-deoxy-D-xylulose 5-phosphate-binding site is contributed by Lys-121. Glu-122 lines the NADPH pocket. Asp-146 is a Mn(2+) binding site. 1-deoxy-D-xylulose 5-phosphate is bound by residues Ser-147, Glu-148, Ser-172, and His-195. Residue Glu-148 participates in Mn(2+) binding. Residue Gly-201 coordinates NADPH. 4 residues coordinate 1-deoxy-D-xylulose 5-phosphate: Ser-208, Asn-213, Lys-214, and Glu-217. Glu-217 serves as a coordination point for Mn(2+).

The protein belongs to the DXR family. The cofactor is Mg(2+). Mn(2+) is required as a cofactor.

The catalysed reaction is 2-C-methyl-D-erythritol 4-phosphate + NADP(+) = 1-deoxy-D-xylulose 5-phosphate + NADPH + H(+). It functions in the pathway isoprenoid biosynthesis; isopentenyl diphosphate biosynthesis via DXP pathway; isopentenyl diphosphate from 1-deoxy-D-xylulose 5-phosphate: step 1/6. Its function is as follows. Catalyzes the NADPH-dependent rearrangement and reduction of 1-deoxy-D-xylulose-5-phosphate (DXP) to 2-C-methyl-D-erythritol 4-phosphate (MEP). This is 1-deoxy-D-xylulose 5-phosphate reductoisomerase from Listeria monocytogenes serotype 4b (strain F2365).